The chain runs to 351 residues: UDP-3-O-acylglucosamine N-acyltransferase (351 aa).

Histidine 240 (proton acceptor) is an active-site residue.

It belongs to the transferase hexapeptide repeat family. LpxD subfamily. In terms of assembly, homotrimer.

The enzyme catalyses a UDP-3-O-[(3R)-3-hydroxyacyl]-alpha-D-glucosamine + a (3R)-hydroxyacyl-[ACP] = a UDP-2-N,3-O-bis[(3R)-3-hydroxyacyl]-alpha-D-glucosamine + holo-[ACP] + H(+). Its pathway is bacterial outer membrane biogenesis; LPS lipid A biosynthesis. Its function is as follows. Catalyzes the N-acylation of UDP-3-O-acylglucosamine using 3-hydroxyacyl-ACP as the acyl donor. Is involved in the biosynthesis of lipid A, a phosphorylated glycolipid that anchors the lipopolysaccharide to the outer membrane of the cell. In Methylacidiphilum infernorum (isolate V4) (Methylokorus infernorum (strain V4)), this protein is UDP-3-O-acylglucosamine N-acyltransferase.